A 282-amino-acid polypeptide reads, in one-letter code: tRNA (guanine-N(1)-)-methyltransferase (282 aa).

Residues 77–114 (TGPAATVSDLESSAEHKRNLRPATTNGDAEPLGEKAGG) are disordered. S-adenosyl-L-methionine-binding positions include G149 and 173-178 (IGDYVL).

It belongs to the RNA methyltransferase TrmD family. As to quaternary structure, homodimer.

The protein localises to the cytoplasm. It carries out the reaction guanosine(37) in tRNA + S-adenosyl-L-methionine = N(1)-methylguanosine(37) in tRNA + S-adenosyl-L-homocysteine + H(+). Its function is as follows. Specifically methylates guanosine-37 in various tRNAs. In Corynebacterium jeikeium (strain K411), this protein is tRNA (guanine-N(1)-)-methyltransferase.